The chain runs to 149 residues: uncharacterized protein (149 aa).

This is an uncharacterized protein from Methanocaldococcus jannaschii (strain ATCC 43067 / DSM 2661 / JAL-1 / JCM 10045 / NBRC 100440) (Methanococcus jannaschii).